Reading from the N-terminus, the 141-residue chain is Hemoglobin subunit alpha-D (141 aa).

Residues 1 to 141 enclose the Globin domain; that stretch reads VLTGEDKKHV…VAAVLAEKYR (141 aa). Heme b is bound by residues His-58 and His-87.

It belongs to the globin family. Heterotetramer of two alpha-D chains and two beta chains. As to expression, red blood cells.

Functionally, involved in oxygen transport from the lung to the various peripheral tissues. The polypeptide is Hemoglobin subunit alpha-D (HBAD) (Turdus merula (Common blackbird)).